The chain runs to 252 residues: MNTKVKIDKLNVHFGQTHAVKDVSIDVPENTVTAIIGPSGCGKSTMLRSLNRMHDLFPNARVTGKVLLDGNDIYDRKVDPVSIRRRVGMVFQKPNPFPAMSIYDNVVAGYKLNGRVKKSDADEIVETSLRRVALWDEVKDRLKSNSMELSGGQQQRLCIARTIAVQPEVILMDEPASALDPISTLKIEELIEELTEKYTIIIVTHNMQQAARVSDYTAFFYMGDLVEWGETKKLFTTPEKKQTEDYITGRFG.

The ABC transporter domain maps to 5–247; that stretch reads VKIDKLNVHF…PEKKQTEDYI (243 aa). 37–44 contacts ATP; the sequence is GPSGCGKS.

This sequence belongs to the ABC transporter superfamily. Phosphate importer (TC 3.A.1.7) family. In terms of assembly, the complex is composed of two ATP-binding proteins (PstB), two transmembrane proteins (PstC and PstA) and a solute-binding protein (PstS).

The protein resides in the cell inner membrane. The catalysed reaction is phosphate(out) + ATP + H2O = ADP + 2 phosphate(in) + H(+). Part of the ABC transporter complex PstSACB involved in phosphate import. Responsible for energy coupling to the transport system. The protein is Phosphate import ATP-binding protein PstB of Geobacter metallireducens (strain ATCC 53774 / DSM 7210 / GS-15).